The following is a 1406-amino-acid chain: MKDLLKFLKAQTKTEEFDAIKIALASPDMIRSWSFGEVKKPETINYRTFKPERDGLFCARIFGPVKDYECLCGKYKRLKHRGVICEKCGVEVTQTKVRRERMGHIELASPTAHIWFLKSLPSRIGLLLDMPLRDIERVLYFESYVVVEGGMTSLERSQILTEEQYLDALEEFGDEFDAKMGAEAIQSLLKNLDLENECETLREELNETNSETKRKKLTKRIKLLEAFIQSGNKPEWMVLTVLPVLPPDLRPLVPLDGGRFATSDLNDLYRRVINRNNRLKRLLDLAAPDIIVRNEKRMLQEAVDALLDNGRRGRAITGSNKRPLKSLADMIKGKQGRFRQNLLGKRVDYSGRSVITVGPYLRLHQCGLPKKMALELFKPFIYGKLELRGLATTIKAAKKMVEREEAVVWDILDEVIREHPVLLNRAPTLHRLGIQAFEPVLIEGKAIQLHPLVCAAYNADFDGDQMAVHVPLTLEAQLEARALMMSTNNILSPASGEPIIVPSQDVVLGLYYMTRDCVNAKGEGMVLTGPKEAERVYRAGLASLHARVKVRITEEVKDGEGNITTNTGLVDTTIGRAILWMIVPRGLPYSLVNQPLGKKAISRMLNTCYRVMGLKPTVIFADQIMYTGFAYAARSGASVGIDDMVIPEKKAGIIAEAEAEVAEIQEQFQSGLVTAGERYNKVIDIWAAANERVAKAMMENLSTETVTNRDGEEEQQVSFNSIFMMADSGARGSAAQIRQLAGMRGLMAKPDGSIIETPITANFREGLNVLQYFISTHGARKGLADTALKTANSGYLTRRLVDVAQDLVVTEDDCGTHDGILMTPVIEGGDVKEPLRERVLGRVTAEDVLKPGTADILVPRNTLLNEKWCDLLEESSVDSIKVRSVVSCETDFGVCANCYGRDLARGHIINKGEAVGVIAAQSIGEPGTQLTMRTFHIGGAASRAAAESSIQVRNKGSLKLFNAKSVTNSAGKLVITSRNTELCLIDEFGRTKESYKVPYGAVLGKGDGETVNGGETVANWDPHTMPVVSEVSGIIRFADMIDGQTITRQTDELTGLSSLVVLDSAERTGSGKDLRPALKIVDAKGDDVLIPGTDMPAQYFLPGKAIVQLDDGVSISAGDTLARIPQESGGTKDITGGLPRVADLFEARRPKEPAILAEVSGIVSFGKETKGKRRLVISPLDGGDAYEEMIPKWRQLNVFEGEVVERGDVISDGPESPHDILRLRGVHAVTRYITNEVQEVYRLQGVKINDKHIEVIVRQMLRKATIESAGSSEFLEGEQVEYARVKVANRKLEQEGKVAATYGRDLLGITKASLATESFISAASFQETTRVLTEAAVAGKRDELRGLKENVIVGRLIPAGTGYAYHQDRIRRRQLNEPAEAPQVSVDEATANLAELLNAGFGGDKK.

The Zn(2+) site is built by Cys70, Cys72, Cys85, and Cys88. Asp460, Asp462, and Asp464 together coordinate Mg(2+). Cys814, Cys888, Cys895, and Cys898 together coordinate Zn(2+).

Belongs to the RNA polymerase beta' chain family. The RNAP catalytic core consists of 2 alpha, 1 beta, 1 beta' and 1 omega subunit. When a sigma factor is associated with the core the holoenzyme is formed, which can initiate transcription. Mg(2+) is required as a cofactor. It depends on Zn(2+) as a cofactor.

The enzyme catalyses RNA(n) + a ribonucleoside 5'-triphosphate = RNA(n+1) + diphosphate. DNA-dependent RNA polymerase catalyzes the transcription of DNA into RNA using the four ribonucleoside triphosphates as substrates. The sequence is that of DNA-directed RNA polymerase subunit beta' from Photorhabdus laumondii subsp. laumondii (strain DSM 15139 / CIP 105565 / TT01) (Photorhabdus luminescens subsp. laumondii).